The following is a 382-amino-acid chain: Lipid-A-disaccharide synthase (382 aa).

Belongs to the LpxB family.

The enzyme catalyses 2-N,3-O-bis[(3R)-3-hydroxytetradecanoyl]-alpha-D-glucosaminyl 1-phosphate + UDP-2-N,3-O-bis[(3R)-3-hydroxytetradecanoyl]-alpha-D-glucosamine = lipid A disaccharide (E. coli) + UDP + H(+). It catalyses the reaction a lipid X + a UDP-2-N,3-O-bis[(3R)-3-hydroxyacyl]-alpha-D-glucosamine = a lipid A disaccharide + UDP + H(+). It participates in glycolipid biosynthesis; lipid IV(A) biosynthesis; lipid IV(A) from (3R)-3-hydroxytetradecanoyl-[acyl-carrier-protein] and UDP-N-acetyl-alpha-D-glucosamine: step 5/6. Condensation of UDP-2,3-diacylglucosamine and 2,3-diacylglucosamine-1-phosphate to form lipid A disaccharide, a precursor of lipid A, a phosphorylated glycolipid that anchors the lipopolysaccharide to the outer membrane of the cell. This Escherichia coli (strain 55989 / EAEC) protein is Lipid-A-disaccharide synthase.